We begin with the raw amino-acid sequence, 178 residues long: Inorganic pyrophosphatase (178 aa).

Positions 30, 44, and 56 each coordinate substrate. Asp-66, Asp-71, and Asp-103 together coordinate Mg(2+). Tyr-142 lines the substrate pocket.

It belongs to the PPase family. In terms of assembly, homohexamer. Mg(2+) serves as cofactor.

The protein resides in the cytoplasm. It carries out the reaction diphosphate + H2O = 2 phosphate + H(+). In terms of biological role, catalyzes the hydrolysis of inorganic pyrophosphate (PPi) forming two phosphate ions. This is Inorganic pyrophosphatase from Bradyrhizobium diazoefficiens (strain JCM 10833 / BCRC 13528 / IAM 13628 / NBRC 14792 / USDA 110).